A 649-amino-acid chain; its full sequence is V-type ATP synthase subunit I (649 aa).

Transmembrane regions (helical) follow at residues 312–332 (FLSFFVFFSMIINDAGYGLIF), 360–380 (FMILGGGCVCWGGATTSFFGV), 455–475 (DNILMEIALLVGVVHLSLGML), 485–505 (IGWVVFMCGAYMYLPIYLQAV), 520–540 (GQVGYYVTFIGLGIAVLGGII), 556–576 (VFSDVLSYLRLYALSLAGAMV), and 593–613 (VLIIIFGHTVNIALSIMGGVI).

Belongs to the V-ATPase 116 kDa subunit family.

The protein resides in the cell membrane. Its function is as follows. Produces ATP from ADP in the presence of a proton gradient across the membrane. The sequence is that of V-type ATP synthase subunit I (atpI) from Chlamydia muridarum (strain MoPn / Nigg).